The chain runs to 689 residues: Shutoff protein (689 aa).

Residues 1–24 (MSEEPVSGTTVEIEEDTHTPPNSP) form a disordered region. The binding to host EIF4G stretch occupies residues 226–289 (VMNNLLVKRA…SVLVTVVLEC (64 aa)). In terms of domain architecture, RRM spans 292 to 410 (RLFTSKDMVK…PLYTETSQRL (119 aa)). Phosphotyrosine; by host occurs at positions 309 and 627. A disordered region spans residues 625 to 689 (GQYLDPHTGE…GEPDVRGTTS (65 aa)). Residues 645–655 (SGHEFQGDGRH) show a composition bias toward basic and acidic residues. The span at 656-675 (REPKRGRHFRQRGGPRKPPR) shows a compositional bias: basic residues. The segment covering 678-689 (AGGEPDVRGTTS) has biased composition (basic and acidic residues).

Belongs to the adenoviridae shutoff protein family. Monomer. Interacts with hexon protein; this interaction allows chaperoning and trimerization of hexon proteins. Interacts (via N-terminus) with host initiation factor EIF4G (via C-terminus). Interacts (via RRM domain) with viral mRNAs that contain the tripartite leader; this interaction allows ribosome shunting and expression of viral late mRNAs. In terms of processing, might be cleaved by the viral protease. Phosphorylated. Tyrosine phosphorylation enhances preferential binding to tripartite leader mRNAs and allows ribosome shunting. Post-translationally, methylated. Asymmetric dimethylation by host PRMT1 of the Arg/Gly-rich region may regulate shutoff protein binding to hexon and promote the capsid assembly in the nucleus.

It is found in the host cytoplasm. Its function is as follows. Protein that inhibits host translation while promoting late viral translation by ribosome shunting. Blocks host cap-dependent translation by binding to eIF4G, displacing MKNK1 from cap initiation complexes and preventing EIF4E phosphorylation. Binds to the tripartite leader sequence of viral late mRNAs and recruits host eIF4G, PABPC1/poly-A binding protein and 40S ribosomes subunits on viral mRNAs, allowing ribosome shunting and efficient translation of late viral mRNAs even though conventional translation via ribosome scanning from the cap has been shut off in the host cell. During assembly, acts as a chaperone protein that helps hexon proteins assembly into trimers. This chain is Shutoff protein, found in Canis lupus familiaris (Dog).